Consider the following 138-residue polypeptide: Large ribosomal subunit protein uL16 (138 aa).

The span at 1-13 shows a compositional bias: basic residues; sequence MLQPARRKFRKEQ. Residues 1-22 are disordered; sequence MLQPARRKFRKEQKGRNTGLAT.

Belongs to the universal ribosomal protein uL16 family. As to quaternary structure, part of the 50S ribosomal subunit.

Its function is as follows. Binds 23S rRNA and is also seen to make contacts with the A and possibly P site tRNAs. This is Large ribosomal subunit protein uL16 from Thiobacillus denitrificans (strain ATCC 25259 / T1).